The primary structure comprises 200 residues: Dephospho-CoA kinase (200 aa).

Positions 3–200 (RIGLTGGIGS…LIAEILSRVN (198 aa)) constitute a DPCK domain. ATP is bound at residue 11–16 (GSGKST).

Belongs to the CoaE family.

The protein resides in the cytoplasm. It catalyses the reaction 3'-dephospho-CoA + ATP = ADP + CoA + H(+). It functions in the pathway cofactor biosynthesis; coenzyme A biosynthesis; CoA from (R)-pantothenate: step 5/5. Functionally, catalyzes the phosphorylation of the 3'-hydroxyl group of dephosphocoenzyme A to form coenzyme A. The polypeptide is Dephospho-CoA kinase (Corynebacterium glutamicum (strain ATCC 13032 / DSM 20300 / JCM 1318 / BCRC 11384 / CCUG 27702 / LMG 3730 / NBRC 12168 / NCIMB 10025 / NRRL B-2784 / 534)).